A 317-amino-acid polypeptide reads, in one-letter code: MEITFLGTSSGVPTRARNVSGVALRLPQRAEAWLFDCGEGTQHQLLRSDLRSSQISRIFITHMHGDHIFGLMGLIASMGLAGTGHPLEIYGPPGLEEYLRACEKYSYMRIGDRLRVHLVKPGLVFEDKEFQVTCLPLKHRVTAFGYRVTEKDRPGRFNLAKAQKLGIPPGPIYGDLKKGKVVTLDDGRKINGSDLCGQPEIGRKMVYCTDTVFCETAVELAQDADVLIHEATFAHKDAEMAFDRLHSTSTMAAQVALLAQVKQLIMTHFSPRYMPGNELTLDDLLAEAQAIFPKTIMAKDFLSYAIPRRKALAKSLH.

His-62, His-64, Asp-66, His-67, His-139, Asp-210, and His-268 together coordinate Zn(2+). The active-site Proton acceptor is the Asp-66.

This sequence belongs to the RNase Z family. In terms of assembly, homodimer. It depends on Zn(2+) as a cofactor.

It carries out the reaction Endonucleolytic cleavage of RNA, removing extra 3' nucleotides from tRNA precursor, generating 3' termini of tRNAs. A 3'-hydroxy group is left at the tRNA terminus and a 5'-phosphoryl group is left at the trailer molecule.. Its function is as follows. Zinc phosphodiesterase, which displays some tRNA 3'-processing endonuclease activity. Probably involved in tRNA maturation, by removing a 3'-trailer from precursor tRNA. The chain is Ribonuclease Z from Picosynechococcus sp. (strain ATCC 27264 / PCC 7002 / PR-6) (Agmenellum quadruplicatum).